We begin with the raw amino-acid sequence, 495 residues long: Glycerol kinase (495 aa).

Thr-11 is a binding site for ADP. Residues Thr-11, Thr-12, and Ser-13 each coordinate ATP. Thr-11 lines the sn-glycerol 3-phosphate pocket. Residue Arg-15 coordinates ADP. Residues Arg-81, Glu-82, Tyr-133, and Asp-242 each contribute to the sn-glycerol 3-phosphate site. Residues Arg-81, Glu-82, Tyr-133, Asp-242, and Gln-243 each contribute to the glycerol site. 2 residues coordinate ADP: Thr-264 and Gly-307. ATP-binding residues include Thr-264, Gly-307, Gln-311, and Gly-408. ADP is bound by residues Gly-408 and Asn-412.

The protein belongs to the FGGY kinase family.

It carries out the reaction glycerol + ATP = sn-glycerol 3-phosphate + ADP + H(+). Its pathway is polyol metabolism; glycerol degradation via glycerol kinase pathway; sn-glycerol 3-phosphate from glycerol: step 1/1. With respect to regulation, inhibited by fructose 1,6-bisphosphate (FBP). Its function is as follows. Key enzyme in the regulation of glycerol uptake and metabolism. Catalyzes the phosphorylation of glycerol to yield sn-glycerol 3-phosphate. The polypeptide is Glycerol kinase (Rhodospirillum rubrum (strain ATCC 11170 / ATH 1.1.1 / DSM 467 / LMG 4362 / NCIMB 8255 / S1)).